A 651-amino-acid polypeptide reads, in one-letter code: p-hydroxybenzoic acid efflux pump subunit AaeB (651 aa).

Transmembrane regions (helical) follow at residues 11-31 (FACK…WFEM), 41-61 (AAIV…SGAI), 65-85 (GLLR…IIMT), 91-111 (VVML…SSLV), 117-137 (YVFA…QSSP), 150-170 (EIIL…PRSV), 367-387 (LFWL…LGVV), 404-424 (FLIG…LVLP), 428-448 (QSLL…GIEI), 454-474 (GSLG…PMTF), and 480-500 (LDNA…IMLI).

This sequence belongs to the aromatic acid exporter ArAE (TC 2.A.85) family.

It localises to the cell inner membrane. Functionally, forms an efflux pump with AaeA. Could function as a metabolic relief valve, allowing to eliminate certain compounds when they accumulate to high levels in the cell. The protein is p-hydroxybenzoic acid efflux pump subunit AaeB of Musicola paradisiaca (strain Ech703) (Dickeya paradisiaca).